The chain runs to 672 residues: Methionine--tRNA ligase (672 aa).

Positions 12-22 (AYTNGPLHLGH) match the 'HIGH' region motif. Residues Cys-144, Cys-147, Cys-156, and Cys-159 each contribute to the Zn(2+) site. The 'KMSKS' region signature appears at 330–334 (KMSTS). Thr-333 provides a ligand contact to ATP. One can recognise a tRNA-binding domain in the interval 573–672 (DFAKIELKVA…KDLPVGSTIC (100 aa)).

Belongs to the class-I aminoacyl-tRNA synthetase family. MetG type 1 subfamily. As to quaternary structure, homodimer. The cofactor is Zn(2+).

It localises to the cytoplasm. The catalysed reaction is tRNA(Met) + L-methionine + ATP = L-methionyl-tRNA(Met) + AMP + diphosphate. Is required not only for elongation of protein synthesis but also for the initiation of all mRNA translation through initiator tRNA(fMet) aminoacylation. The sequence is that of Methionine--tRNA ligase from Methanococcus aeolicus (strain ATCC BAA-1280 / DSM 17508 / OCM 812 / Nankai-3).